The following is a 430-amino-acid chain: Signal recognition particle protein (430 aa).

GTP is bound by residues 105 to 112 (GLQGSGKT), 187 to 191 (DTAGR), and 245 to 248 (TKLD).

Belongs to the GTP-binding SRP family. SRP54 subfamily. Part of the signal recognition particle protein translocation system, which is composed of SRP and FtsY.

It localises to the cytoplasm. It catalyses the reaction GTP + H2O = GDP + phosphate + H(+). Functionally, involved in targeting and insertion of nascent membrane proteins into the cytoplasmic membrane. Binds to the hydrophobic signal sequence of the ribosome-nascent chain (RNC) as it emerges from the ribosomes. The SRP-RNC complex is then targeted to the cytoplasmic membrane where it interacts with the SRP receptor FtsY. This Thermus aquaticus protein is Signal recognition particle protein.